Consider the following 195-residue polypeptide: Imidazoleglycerol-phosphate dehydratase (195 aa).

Belongs to the imidazoleglycerol-phosphate dehydratase family.

It is found in the cytoplasm. The catalysed reaction is D-erythro-1-(imidazol-4-yl)glycerol 3-phosphate = 3-(imidazol-4-yl)-2-oxopropyl phosphate + H2O. Its pathway is amino-acid biosynthesis; L-histidine biosynthesis; L-histidine from 5-phospho-alpha-D-ribose 1-diphosphate: step 6/9. The sequence is that of Imidazoleglycerol-phosphate dehydratase from Burkholderia ambifaria (strain MC40-6).